Here is a 287-residue protein sequence, read N- to C-terminus: Large ribosomal subunit protein uL2 (287 aa).

Residues 221–287 (RGSVMNPCDH…SKRSRGGRDS (67 aa)) are disordered. The span at 258-287 (KTRKRNKPSNKFVLRKRRKTSKRSRGGRDS) shows a compositional bias: basic residues.

Belongs to the universal ribosomal protein uL2 family. Part of the 50S ribosomal subunit. Forms a bridge to the 30S subunit in the 70S ribosome.

One of the primary rRNA binding proteins. Required for association of the 30S and 50S subunits to form the 70S ribosome, for tRNA binding and peptide bond formation. It has been suggested to have peptidyltransferase activity; this is somewhat controversial. Makes several contacts with the 16S rRNA in the 70S ribosome. The sequence is that of Large ribosomal subunit protein uL2 from Synechococcus sp. (strain CC9311).